Here is a 62-residue protein sequence, read N- to C-terminus: Defensin-like protein A (62 aa).

The N-terminal stretch at 1–26 is a signal peptide; sequence MRCVVLFMVSCLLIVLLINHFEEVEA. The cysteines at positions 42 and 52 are disulfide-linked.

This sequence belongs to the DEFL family.

The protein resides in the secreted. Functionally, truncated and inactivated form of SCRA, a protein involved in male-mediated self-incompatibility when active. Most A.thaliana cultivars contain such an inactive form and thus, are self-fertiles. The protein is Defensin-like protein A (SCRA) of Arabidopsis thaliana (Mouse-ear cress).